Reading from the N-terminus, the 280-residue chain is 4-diphosphocytidyl-2-C-methyl-D-erythritol kinase (280 aa).

Residue lysine 11 is part of the active site. Residue 95–105 (PVGAGLGGGSS) participates in ATP binding. Aspartate 137 is a catalytic residue.

It belongs to the GHMP kinase family. IspE subfamily.

It carries out the reaction 4-CDP-2-C-methyl-D-erythritol + ATP = 4-CDP-2-C-methyl-D-erythritol 2-phosphate + ADP + H(+). Its pathway is isoprenoid biosynthesis; isopentenyl diphosphate biosynthesis via DXP pathway; isopentenyl diphosphate from 1-deoxy-D-xylulose 5-phosphate: step 3/6. In terms of biological role, catalyzes the phosphorylation of the position 2 hydroxy group of 4-diphosphocytidyl-2C-methyl-D-erythritol. The chain is 4-diphosphocytidyl-2-C-methyl-D-erythritol kinase from Citrifermentans bemidjiense (strain ATCC BAA-1014 / DSM 16622 / JCM 12645 / Bem) (Geobacter bemidjiensis).